The sequence spans 140 residues: Lymphocyte antigen 6H (140 aa).

The signal sequence occupies residues 1-25 (MLPAAMKGLGLALLAVLLCSAPAHG). Residues 26–91 (LWCQDCTLTT…RHFFSDYLMG (66 aa)) form the UPAR/Ly6 domain. 4 disulfide bridges follow: Cys28-Cys52, Cys31-Cys40, Cys45-Cys73, and Cys77-Cys104. N-linked (GlcNAc...) asparagine glycosylation is present at Asn36. A lipid anchor (GPI-anchor amidated glycine) is attached at Gly115. Residues 116-140 (AGHSPWALAGGLLLSLGPALLWAGP) constitute a propeptide, removed in mature form.

As to quaternary structure, interacts with CHRNA4 and CHRNA7.

The protein localises to the cell membrane. Its function is as follows. Believed to act as a modulator of nicotinic acetylcholine receptors (nAChRs) activity. In vitro inhibits alpha-3:beta-4-containing nAChRs maximum response. May play a role in the intracellular trafficking of alpha-7-containing nAChRs and may inhibit their expression at the cell surface. Seems to inhibit alpha-7/CHRNA7 signaling in hippocampal neurons. This Macaca fascicularis (Crab-eating macaque) protein is Lymphocyte antigen 6H (LY6H).